A 356-amino-acid chain; its full sequence is Guanine nucleotide-binding protein alpha-2 subunit (356 aa).

A lipid anchor (N-myristoyl glycine) is attached at G2. A lipid anchor (S-palmitoyl cysteine) is attached at C4. Positions 35–356 constitute a G-alpha domain; the sequence is REVKLLLLGA…LTNNLRDIVL (322 aa). Positions 38 to 51 are G1 motif; the sequence is KLLLLGAGESGKST. GTP contacts are provided by E46, S47, G48, K49, S50, T51, D153, L178, T184, G206, N272, K273, D275, and A329. S50 lines the Mg(2+) pocket. Residues 176–184 are G2 motif; sequence DILRCRNKT. T184 lines the Mg(2+) pocket. Residues 199-208 are G3 motif; the sequence is YRIFDVGGQR. The G4 motif stretch occupies residues 268 to 275; the sequence is ILFLNKVD. Residues 327 to 332 are G5 motif; sequence TNATDV.

Belongs to the G-alpha family. As to quaternary structure, g proteins are composed of 3 units; alpha, beta and gamma. The alpha chain contains the guanine nucleotide binding site. Mg(2+) is required as a cofactor.

Functionally, guanine nucleotide-binding proteins (G proteins) are involved as modulators or transducers in various transmembrane signaling systems. The polypeptide is Guanine nucleotide-binding protein alpha-2 subunit (GPA2) (Mycosarcoma maydis (Corn smut fungus)).